Here is a 92-residue protein sequence, read N- to C-terminus: Large ribosomal subunit protein bL31 (92 aa).

Belongs to the bacterial ribosomal protein bL31 family. Type A subfamily. Part of the 50S ribosomal subunit.

Functionally, binds the 23S rRNA. The chain is Large ribosomal subunit protein bL31 from Mesoplasma florum (strain ATCC 33453 / NBRC 100688 / NCTC 11704 / L1) (Acholeplasma florum).